The primary structure comprises 358 residues: Fructose-bisphosphate aldolase 3, cytoplasmic (358 aa).

Arg39 lines the substrate pocket. The active-site Proton acceptor is the Glu183. Lys225 serves as the catalytic Schiff-base intermediate with dihydroxyacetone-P. Substrate contacts are provided by residues 266-268 (SGG) and Arg298.

This sequence belongs to the class I fructose-bisphosphate aldolase family. As to quaternary structure, homotetramer.

Its subcellular location is the cytoplasm. It localises to the cytosol. It carries out the reaction beta-D-fructose 1,6-bisphosphate = D-glyceraldehyde 3-phosphate + dihydroxyacetone phosphate. It functions in the pathway carbohydrate degradation; glycolysis; D-glyceraldehyde 3-phosphate and glycerone phosphate from D-glucose: step 4/4. Fructose-bisphosphate aldolase that plays a key role in glycolysis and gluconeogenesis. This chain is Fructose-bisphosphate aldolase 3, cytoplasmic, found in Oryza sativa subsp. japonica (Rice).